The sequence spans 52 residues: UPF0181 protein HI_1434.2 (52 aa).

Belongs to the UPF0181 family.

The protein is UPF0181 protein HI_1434.2 of Haemophilus influenzae (strain ATCC 51907 / DSM 11121 / KW20 / Rd).